The following is a 773-amino-acid chain: Beta-D-xylosidase 3 (773 aa).

The N-terminal stretch at 1–23 (MASRNRALFSVSTLFLCFIVCIS) is a signal peptide. A glycan (N-linked (GlcNAc...) asparagine) is linked at N131. D298 is a catalytic residue. 3 N-linked (GlcNAc...) asparagine glycosylation sites follow: N349, N432, and N770.

The protein belongs to the glycosyl hydrolase 3 family. In terms of tissue distribution, expressed in flowers and siliques, in the early stage of seed formation and not at seed maturation. Detected exclusively in the endosperm of very young seeds when the embryo is at the globular stage.

It localises to the secreted. Its subcellular location is the extracellular space. The protein localises to the extracellular matrix. The catalysed reaction is Hydrolysis of terminal non-reducing alpha-L-arabinofuranoside residues in alpha-L-arabinosides.. Involved in the hydrolysis of arabinan. Can hydrolyze (1,3)-alpha-, (1,2)-alpha-linked side group residues and non-reducing terminal L-arabinofuranose residues of debranched (1,5)-alpha-L-arabinan backbone. Also acts as a beta-D-xylosidase, releasing D-xylose from arabinoxylan and xylan. The sequence is that of Beta-D-xylosidase 3 (BXL3) from Arabidopsis thaliana (Mouse-ear cress).